We begin with the raw amino-acid sequence, 536 residues long: Austinoid biosynthesis cluster protein W (536 aa).

An N-terminal signal peptide occupies residues M1 to A19. 5 disordered regions span residues G141–P164, S185–S220, F261–G302, P385–G423, and P491–E536. The segment covering S195–D208 has biased composition (low complexity). Residues S209 to S220 show a composition bias toward gly residues. Low complexity-rich tracts occupy residues A287–G302 and A408–G423.

It functions in the pathway secondary metabolite biosynthesis; terpenoid biosynthesis. Its function is as follows. Part of the gene cluster that mediates the biosynthesis of calidodehydroaustin, a fungal meroterpenoid. The first step of the pathway is the synthesis of 3,5-dimethylorsellinic acid by the polyketide synthase ausA. 3,5-dimethylorsellinic acid is then prenylated by the polyprenyl transferase ausN. Further epoxidation by the FAD-dependent monooxygenase ausM and cyclization by the probable terpene cyclase ausL lead to the formation of protoaustinoid A. Protoaustinoid A is then oxidized to spiro-lactone preaustinoid A3 by the combined action of the FAD-binding monooxygenases ausB and ausC, and the dioxygenase ausE. Acid-catalyzed keto-rearrangement and ring contraction of the tetraketide portion of preaustinoid A3 by ausJ lead to the formation of preaustinoid A4. The aldo-keto reductase ausK, with the help of ausH, is involved in the next step by transforming preaustinoid A4 into isoaustinone which is in turn hydroxylated by the P450 monooxygenase ausI to form austinolide. The cytochrome P450 monooxygenase ausG modifies austinolide to austinol. Austinol is further acetylated to austin by the O-acetyltransferase ausP, which spontaneously changes to dehydroaustin. The cytochrome P450 monooxygenase ausR then converts dehydroaustin is into 7-dehydrodehydroaustin. The hydroxylation catalyzed by ausR permits the O-acetyltransferase ausQ to add an additional acetyl group to the molecule, leading to the formation of acetoxydehydroaustin. The short chain dehydrogenase ausT catalyzes the reduction of the double bond present between carbon atoms 1 and 2 to convert 7-dehydrodehydroaustin into 1,2-dihydro-7-hydroxydehydroaustin. AusQ catalyzes not only an acetylation reaction but also the addition of the PKS ausV diketide product to 1,2-dihydro-7-hydroxydehydroaustin, forming precalidodehydroaustin. Finally, the iron/alpha-ketoglutarate-dependent dioxygenase converts precalidodehydroaustin into calidodehydroaustin. This is Austinoid biosynthesis cluster protein W from Aspergillus calidoustus.